Consider the following 374-residue polypeptide: Chaperone protein DnaJ (374 aa).

The region spanning 5 to 70 (DFYEILGLGK…QKRDAYDRYG (66 aa)) is the J domain. Residues 28–47 (LAMKHHPDRNPDSKGAEDKF) are disordered. Residues 35-47 (DRNPDSKGAEDKF) show a composition bias toward basic and acidic residues. The segment at 134–212 (GYDTTIRVPS…CSGAGKIKRN (79 aa)) adopts a CR-type zinc-finger fold. Residues C147, C150, C164, C167, C186, C189, C200, and C203 each contribute to the Zn(2+) site. CXXCXGXG motif repeat units follow at residues 147–154 (CETCDGSG), 164–171 (CTTCGGHG), 186–193 (CPKCHGSG), and 200–207 (CTACSGAG).

The protein belongs to the DnaJ family. In terms of assembly, homodimer. Zn(2+) serves as cofactor.

It is found in the cytoplasm. Its function is as follows. Participates actively in the response to hyperosmotic and heat shock by preventing the aggregation of stress-denatured proteins and by disaggregating proteins, also in an autonomous, DnaK-independent fashion. Unfolded proteins bind initially to DnaJ; upon interaction with the DnaJ-bound protein, DnaK hydrolyzes its bound ATP, resulting in the formation of a stable complex. GrpE releases ADP from DnaK; ATP binding to DnaK triggers the release of the substrate protein, thus completing the reaction cycle. Several rounds of ATP-dependent interactions between DnaJ, DnaK and GrpE are required for fully efficient folding. Also involved, together with DnaK and GrpE, in the DNA replication of plasmids through activation of initiation proteins. This chain is Chaperone protein DnaJ, found in Herminiimonas arsenicoxydans.